A 280-amino-acid chain; its full sequence is Probable endonuclease 4 (280 aa).

Zn(2+) contacts are provided by His-77, His-117, Glu-148, Asp-180, His-183, His-215, Asp-228, His-230, and Glu-259.

The protein belongs to the AP endonuclease 2 family. It depends on Zn(2+) as a cofactor.

The catalysed reaction is Endonucleolytic cleavage to 5'-phosphooligonucleotide end-products.. Its function is as follows. Endonuclease IV plays a role in DNA repair. It cleaves phosphodiester bonds at apurinic or apyrimidinic (AP) sites, generating a 3'-hydroxyl group and a 5'-terminal sugar phosphate. The protein is Probable endonuclease 4 of Thermoplasma volcanium (strain ATCC 51530 / DSM 4299 / JCM 9571 / NBRC 15438 / GSS1).